We begin with the raw amino-acid sequence, 735 residues long: Urea active transporter (735 aa).

The Cytoplasmic portion of the chain corresponds to 1-14 (MGEFKPPLPQGAGY). Residues 15 to 35 (AIVLGLGAVFAGMMVLTTYLL) form a helical membrane-spanning segment. At 36-85 (KRYQKEIITAEEFTTAGRSVKTGLVAAAVVSSWIWCSTLLTSSTKEYADG) the chain is on the extracellular side. Residues 86–106 (IFGGYAYAAGACFQIIAFAIL) form a helical membrane-spanning segment. Residues 107–130 (AIKTKQMAPNAHTYLELVRTRYGK) lie on the Cytoplasmic side of the membrane. The helical transmembrane segment at 131-151 (IGHGCYLFYAIATNILVTSML) threads the bilayer. Over 152-166 (LTSGSAVFSDLTGMN) the chain is Extracellular. The helical transmembrane segment at 167-187 (TIASCFLLPVGVVVYTLFGGI) threads the bilayer. Topologically, residues 188-189 (KA) are cytoplasmic. The chain crosses the membrane as a helical span at residues 190–210 (TFLTDYMHTCVIIIIVLVFAF). Residues 211–253 (KVYATSDVLGSPGKVYDLVREAAKRHPVDGNYQGEYMTMTSKS) lie on the Extracellular side of the membrane. A helical transmembrane segment spans residues 254–274 (AGILLIINLIGNFGTVFLDNG). Topologically, residues 275–295 (YWNKAISASPAASLKAYAIGG) are cytoplasmic. A helical membrane pass occupies residues 296-316 (LAWFAVPSLISLTMGLACLAV). The Extracellular segment spans residues 317–343 (ETSPNFPTYPDPLTSFQANSGLVLPAA). A helical membrane pass occupies residues 344–364 (AIAIMGKGGAVASLLMIFMAV). Residues 365-403 (TSAMSAELIAVSSVFTYDIYREYIDPRASGKKLIYTSHV) are Cytoplasmic-facing. The helical transmembrane segment at 404 to 424 (ACIFFGLAMSGFSVGLYYGGI) threads the bilayer. A topological domain (extracellular) is located at residue serine 425. The chain crosses the membrane as a helical span at residues 426–446 (MGYIYEMMGIIISSAVLPVVL). The Cytoplasmic segment spans residues 447–454 (TLCSKDMN). A helical membrane pass occupies residues 455–475 (LVAAVVSPILGTGLAIMSWLV). Over 476-496 (CTKSLYKELTVDTTFMDYPML) the chain is Extracellular. Residues 497–517 (TGNLVALLSPAIFIPILTYVF) form a helical membrane-spanning segment. Residues 518–618 (KPQNFDWEKM…EQRELARGLK (101 aa)) are Cytoplasmic-facing. The segment at 553-572 (ANDKEQEEETNSLVSDSEKN) is disordered. The chain crosses the membrane as a helical span at residues 619–639 (IAYFLCVFFALAFLVVWPMPM). Over 640-650 (YGSKYIFSKKF) the chain is Extracellular. A helical membrane pass occupies residues 651 to 671 (FTGWVVVMIIWLFFSAFAVCI). Over 672 to 735 (YPLWEGRHGI…SHFGQVDEII (64 aa)) the chain is Cytoplasmic.

The protein belongs to the sodium:solute symporter (SSF) (TC 2.A.21) family. May polymerize.

The protein localises to the membrane. In terms of biological role, required for active transport of urea. The chain is Urea active transporter (DUR3) from Saccharomyces cerevisiae (strain ATCC 204508 / S288c) (Baker's yeast).